The primary structure comprises 145 residues: DNA polymerase epsilon subunit 3 (145 aa).

The residue at position 2 (A2) is an N-acetylalanine. Position 83 is a phosphothreonine (T83). Residues 85 to 144 (LKEALEAYRREQKGKKEASEQKKKDKDKKDCEEQDKSREEEDEDEERLDEEEQNEEEEVD) are a coiled coil. Residues 93 to 123 (RREQKGKKEASEQKKKDKDKKDCEEQDKSRE) show a composition bias toward basic and acidic residues. The interval 93–145 (RREQKGKKEASEQKKKDKDKKDCEEQDKSREEEDEDEERLDEEEQNEEEEVDN) is disordered. Position 121 is a phosphoserine (S121). Acidic residues predominate over residues 124–145 (EEDEDEERLDEEEQNEEEEVDN).

As to quaternary structure, component of the DNA polymerase epsilon complex consisting of four subunits: the catalytic subunit POLE and the accessory subunits POLE2, POLE3 and POLE4. Interaction with POLE4 is a prerequisite for further binding with POLE and POLE2. Heterodimer with CHRAC1; binds to DNA. Component of the CHRAC ISWI chromatin remodeling complex at least composed of SMARCA5/SNF2H, BAZ1A/ACF1, CHRAC1 and POLE3; the complex preferentially binds DNA through the CHRAC1-POLE3 heterodimer and possesses ATP-dependent nucleosome-remodeling activity. Within the complex, the heterodimer with CHRAC1 interacts with SMARCA5/SNF2H; the interaction is direct and enhances nucleosome sliding activity by the SMARCA5/SNF2H and BAZ1A/ACF1 interaction. Within the complex, the heterodimer with CHRAC1 interacts with BAZ1A/ACF1; the interactions are direct.

The protein resides in the nucleus. In terms of biological role, accessory component of the DNA polymerase epsilon complex. Participates in DNA repair and in chromosomal DNA replication. Forms a complex with CHRAC1 and binds naked DNA, which is then incorporated into chromatin, aided by the nucleosome-remodeling activity of ISWI/SNF2H and ACF1. Does not enhance nucleosome sliding activity of the ACF-5 ISWI chromatin remodeling complex. The protein is DNA polymerase epsilon subunit 3 (Pole3) of Rattus norvegicus (Rat).